A 399-amino-acid chain; its full sequence is Proteasome-activating nucleotidase (399 aa).

Positions 19 to 60 (ITYLKRRIRQLELQVRMLEADKERLERELSRLRSEMSRLRQP) form a coiled coil. ATP contacts are provided by residues 184 to 189 (GCGKTL) and H323. A docks into pockets in the proteasome alpha-ring to cause gate opening region spans residues 397–399 (IYG).

The protein belongs to the AAA ATPase family. As to quaternary structure, homohexamer. The hexameric complex has a two-ring architecture resembling a top hat that caps the 20S proteasome core at one or both ends. Upon ATP-binding, the C-terminus of PAN interacts with the alpha-rings of the proteasome core by binding to the intersubunit pockets.

The protein resides in the cytoplasm. Functionally, ATPase which is responsible for recognizing, binding, unfolding and translocation of substrate proteins into the archaeal 20S proteasome core particle. Is essential for opening the gate of the 20S proteasome via an interaction with its C-terminus, thereby allowing substrate entry and access to the site of proteolysis. Thus, the C-termini of the proteasomal ATPase function like a 'key in a lock' to induce gate opening and therefore regulate proteolysis. Unfolding activity requires energy from ATP hydrolysis, whereas ATP binding alone promotes ATPase-20S proteasome association which triggers gate opening, and supports translocation of unfolded substrates. This Pyrococcus horikoshii (strain ATCC 700860 / DSM 12428 / JCM 9974 / NBRC 100139 / OT-3) protein is Proteasome-activating nucleotidase.